Here is a 436-residue protein sequence, read N- to C-terminus: Adenosylmethionine-8-amino-7-oxononanoate aminotransferase (436 aa).

W56 contributes to the substrate binding site. Pyridoxal 5'-phosphate is bound at residue 114-115 (GS). Y148 provides a ligand contact to substrate. D245 contacts pyridoxal 5'-phosphate. Substrate is bound by residues K274, S309, and R400. K274 carries the N6-(pyridoxal phosphate)lysine modification.

Belongs to the class-III pyridoxal-phosphate-dependent aminotransferase family. BioA subfamily. In terms of assembly, homodimer. Requires pyridoxal 5'-phosphate as cofactor.

It is found in the cytoplasm. The enzyme catalyses (8S)-8-amino-7-oxononanoate + S-adenosyl-L-methionine = S-adenosyl-4-methylsulfanyl-2-oxobutanoate + (7R,8S)-7,8-diammoniononanoate. It functions in the pathway cofactor biosynthesis; biotin biosynthesis; 7,8-diaminononanoate from 8-amino-7-oxononanoate (SAM route): step 1/1. Its function is as follows. Catalyzes the transfer of the alpha-amino group from S-adenosyl-L-methionine (SAM) to 7-keto-8-aminopelargonic acid (KAPA) to form 7,8-diaminopelargonic acid (DAPA). It is the only aminotransferase known to utilize SAM as an amino donor. The sequence is that of Adenosylmethionine-8-amino-7-oxononanoate aminotransferase from Helicobacter pylori (strain ATCC 700392 / 26695) (Campylobacter pylori).